Here is a 114-residue protein sequence, read N- to C-terminus: MEKKEYLKKYYEENKPKIKKYYSKKIECPICGALYTRSNVTNHKKSQKHIKAINNDLESNYIKLKKDMKMLVDIEQKYQKLKEYNNTLHSYEDELKKTKEKYRNLKKVLEIMEN.

This is an uncharacterized protein from Acanthamoeba polyphaga (Amoeba).